Consider the following 101-residue polypeptide: Large ribosomal subunit protein uL23 (101 aa).

Belongs to the universal ribosomal protein uL23 family. As to quaternary structure, part of the 50S ribosomal subunit. Contacts protein L29, and trigger factor when it is bound to the ribosome.

One of the early assembly proteins it binds 23S rRNA. One of the proteins that surrounds the polypeptide exit tunnel on the outside of the ribosome. Forms the main docking site for trigger factor binding to the ribosome. This chain is Large ribosomal subunit protein uL23, found in Nocardia farcinica (strain IFM 10152).